Consider the following 121-residue polypeptide: LOB domain-containing protein 24 (121 aa).

The 102-residue stretch at 4 to 105 (KRCAACKYLR…NELAKTQAEI (102 aa)) folds into the LOB domain.

This sequence belongs to the LOB domain-containing protein family.

This is LOB domain-containing protein 24 (LBD24) from Arabidopsis thaliana (Mouse-ear cress).